The following is a 442-amino-acid chain: Cyclic adenylate deaminase (442 aa).

Belongs to the metallo-dependent hydrolases superfamily. Adenosine and AMP deaminases family. Zn(2+) serves as cofactor.

The catalysed reaction is 3',5'-cyclic AMP + H2O + H(+) = 3',5'-cyclic IMP + NH4(+). Its function is as follows. Deaminates cAMP into cIMP, thereby repressing cAMP dependent metabolism or genes. The polypeptide is Cyclic adenylate deaminase (add) (Leptospira interrogans serogroup Icterohaemorrhagiae serovar copenhageni (strain Fiocruz L1-130)).